The following is a 91-amino-acid chain: RNA-binding protein Hfq (91 aa).

One can recognise a Sm domain in the interval aspartate 9–valine 68. The disordered stretch occupies residues serine 69–glutamate 91.

It belongs to the Hfq family. As to quaternary structure, homohexamer.

In terms of biological role, RNA chaperone that binds small regulatory RNA (sRNAs) and mRNAs to facilitate mRNA translational regulation in response to envelope stress, environmental stress and changes in metabolite concentrations. Also binds with high specificity to tRNAs. The sequence is that of RNA-binding protein Hfq from Haemophilus influenzae (strain ATCC 51907 / DSM 11121 / KW20 / Rd).